Reading from the N-terminus, the 197-residue chain is Holliday junction branch migration complex subunit RuvA (197 aa).

Residues 1-63 (MYAYLKGIIT…EDAHLLYGFR (63 aa)) form a domain I region. The domain II stretch occupies residues 64–142 (SEDEKKLFLS…VAGDDLPAKI (79 aa)). A flexible linker region spans residues 143 to 147 (AVQAS). The interval 148–197 (AENQELEEAMEAMLALGYKATELKKIKKFFEGTTDTAENYIKSALKMLVK) is domain III.

This sequence belongs to the RuvA family. Homotetramer. Forms an RuvA(8)-RuvB(12)-Holliday junction (HJ) complex. HJ DNA is sandwiched between 2 RuvA tetramers; dsDNA enters through RuvA and exits via RuvB. An RuvB hexamer assembles on each DNA strand where it exits the tetramer. Each RuvB hexamer is contacted by two RuvA subunits (via domain III) on 2 adjacent RuvB subunits; this complex drives branch migration. In the full resolvosome a probable DNA-RuvA(4)-RuvB(12)-RuvC(2) complex forms which resolves the HJ.

The protein resides in the cytoplasm. Functionally, the RuvA-RuvB-RuvC complex processes Holliday junction (HJ) DNA during genetic recombination and DNA repair, while the RuvA-RuvB complex plays an important role in the rescue of blocked DNA replication forks via replication fork reversal (RFR). RuvA specifically binds to HJ cruciform DNA, conferring on it an open structure. The RuvB hexamer acts as an ATP-dependent pump, pulling dsDNA into and through the RuvAB complex. HJ branch migration allows RuvC to scan DNA until it finds its consensus sequence, where it cleaves and resolves the cruciform DNA. This is Holliday junction branch migration complex subunit RuvA from Streptococcus pneumoniae (strain Taiwan19F-14).